A 248-amino-acid chain; its full sequence is Triosephosphate isomerase (248 aa).

9 to 11 is a binding site for substrate; the sequence is NWK. The Electrophile role is filled by H101. The active-site Proton acceptor is E170. Substrate contacts are provided by residues G176, S208, and 229–230; that span reads GG.

Belongs to the triosephosphate isomerase family. Homodimer.

It is found in the cytoplasm. The catalysed reaction is D-glyceraldehyde 3-phosphate = dihydroxyacetone phosphate. Its pathway is carbohydrate biosynthesis; gluconeogenesis. The protein operates within carbohydrate degradation; glycolysis; D-glyceraldehyde 3-phosphate from glycerone phosphate: step 1/1. Involved in the gluconeogenesis. Catalyzes stereospecifically the conversion of dihydroxyacetone phosphate (DHAP) to D-glyceraldehyde-3-phosphate (G3P). This Mycoplasmopsis pulmonis (strain UAB CTIP) (Mycoplasma pulmonis) protein is Triosephosphate isomerase.